A 99-amino-acid chain; its full sequence is Biogenesis of lysosome-related organelles complex 1 subunit SNN1 (99 aa).

Residues 34–94 are a coiled coil; it reads SINELRESQA…VVLKRYEKMV (61 aa).

The protein belongs to the SNAPIN family. In terms of assembly, component of the biogenesis of lysosome-related organelles complex-1 (BLOC-1).

Its subcellular location is the endosome. In terms of biological role, component of the biogenesis of lysosome-related organelles complex-1 (BLOC-1), a complex involved in endosomal cargo sorting. This chain is Biogenesis of lysosome-related organelles complex 1 subunit SNN1 (SNN1), found in Kluyveromyces lactis (strain ATCC 8585 / CBS 2359 / DSM 70799 / NBRC 1267 / NRRL Y-1140 / WM37) (Yeast).